The chain runs to 458 residues: ATP synthase subunit beta (458 aa).

Residue 148 to 155 (GGAGVGKT) participates in ATP binding.

This sequence belongs to the ATPase alpha/beta chains family. In terms of assembly, F-type ATPases have 2 components, CF(1) - the catalytic core - and CF(0) - the membrane proton channel. CF(1) has five subunits: alpha(3), beta(3), gamma(1), delta(1), epsilon(1). CF(0) has three main subunits: a(1), b(2) and c(9-12). The alpha and beta chains form an alternating ring which encloses part of the gamma chain. CF(1) is attached to CF(0) by a central stalk formed by the gamma and epsilon chains, while a peripheral stalk is formed by the delta and b chains.

It is found in the cell inner membrane. The enzyme catalyses ATP + H2O + 4 H(+)(in) = ADP + phosphate + 5 H(+)(out). In terms of biological role, produces ATP from ADP in the presence of a proton gradient across the membrane. The catalytic sites are hosted primarily by the beta subunits. This Francisella tularensis subsp. mediasiatica (strain FSC147) protein is ATP synthase subunit beta.